The sequence spans 402 residues: uncharacterized protein (402 aa).

This sequence to M.genitalium MG148.

This is an uncharacterized protein from Caldicellulosiruptor sp. (strain Rt8B.4).